The sequence spans 509 residues: Cytochrome P450 monooxygenase hepC (509 aa).

The helical transmembrane segment at 5–25 threads the bilayer; the sequence is MIIPSFWTGTAIIGLVACAYV. Cys-454 is a heme binding site. Residue Asn-491 is glycosylated (N-linked (GlcNAc...) asparagine).

This sequence belongs to the cytochrome P450 family. Heme is required as a cofactor.

The protein resides in the membrane. It functions in the pathway secondary metabolite biosynthesis. Its function is as follows. Cytochrome P450 monooxygenase; part of the gene cluster that mediates the biosynthesis of heptelidic acid (HA), a sesquiterpene lactone that acts as an inhibitor of glyceraldehyde-3-phosphatedehydrogenase (GAPDH) and a growth inhibitor of the salt-tolerant lactic acid bacteria in soy sauce brewing. This chain is Cytochrome P450 monooxygenase hepC, found in Aspergillus oryzae (strain ATCC 42149 / RIB 40) (Yellow koji mold).